A 269-amino-acid chain; its full sequence is CCAAT/enhancer-binding protein delta (269 aa).

Disordered stretches follow at residues M1 to A48, P97 to S133, and A151 to M219. S2 carries the N-acetylserine modification. Low complexity-rich tracts occupy residues G36–A48 and P97–R107. K120 participates in a covalent cross-link: Glycyl lysine isopeptide (Lys-Gly) (interchain with G-Cter in SUMO). Residues P155–G175 are compositionally biased toward pro residues. The segment covering A177–N201 has biased composition (basic and acidic residues). In terms of domain architecture, bZIP spans S191–L254. The tract at residues R195–K222 is basic motif. The leucine-zipper stretch occupies residues L226–L254.

This sequence belongs to the bZIP family. C/EBP subfamily. As to quaternary structure, binds DNA as a homodimer and as a heterodimer. Can form stable heterodimers with CEBPB. Can form stable heterodimers with CEBPA and CEBPE. Directly interacts with SPI1/PU.1; this interaction does not affect DNA-binding properties of each partner. Interacts with PRDM16.

The protein localises to the nucleus. Its function is as follows. Transcription activator that recognizes two different DNA motifs: the CCAAT homology common to many promoters and the enhanced core homology common to many enhancers. Important transcription factor regulating the expression of genes involved in immune and inflammatory responses. Transcriptional activator that enhances IL6 transcription alone and as heterodimer with CEBPB. This chain is CCAAT/enhancer-binding protein delta (CEBPD), found in Homo sapiens (Human).